The chain runs to 245 residues: MANQKKKEMVHDFQQKFTDKMKSLGLHFKNIDLYQQAFSHSSFINDFNMNRLEHNERLEFLGDAVLELTVSRYLFDRHPHLPEGNLTKMRATIVCEPSLVIFANKIKLNELILLGKGEEKTGGRTRPSLISDAFEAFVGALYLDQGLDTVWTFAEKVIFPYVEDDELVGVVDFKTQFQEYVHSQNKGDVTYQLIKEEGPAHHRLFTSEVILENKAVAEGKGKTKKESEQKAAEQAYKLMKNKKSL.

Positions 17-146 constitute an RNase III domain; it reads FTDKMKSLGL…FVGALYLDQG (130 aa). A Mg(2+)-binding site is contributed by glutamate 59. Residue aspartate 63 is part of the active site. 2 residues coordinate Mg(2+): aspartate 132 and glutamate 135. Residue glutamate 135 is part of the active site. The DRBM domain occupies 172–241; that stretch reads DFKTQFQEYV…AEQAYKLMKN (70 aa).

This sequence belongs to the ribonuclease III family. Homodimer. Requires Mg(2+) as cofactor.

The protein localises to the cytoplasm. It catalyses the reaction Endonucleolytic cleavage to 5'-phosphomonoester.. In terms of biological role, digests double-stranded RNA. Involved in the processing of primary rRNA transcript to yield the immediate precursors to the large and small rRNAs (23S and 16S). Processes some mRNAs, and tRNAs when they are encoded in the rRNA operon. Processes pre-crRNA and tracrRNA of type II CRISPR loci if present in the organism. This chain is Ribonuclease 3, found in Staphylococcus epidermidis (strain ATCC 35984 / DSM 28319 / BCRC 17069 / CCUG 31568 / BM 3577 / RP62A).